A 370-amino-acid chain; its full sequence is uncharacterized protein (370 aa).

K207 carries the post-translational modification N6-(pyridoxal phosphate)lysine.

Belongs to the class-V pyridoxal-phosphate-dependent aminotransferase family. Pyridoxal 5'-phosphate serves as cofactor.

This is an uncharacterized protein from Bacillus subtilis (strain 168).